A 372-amino-acid chain; its full sequence is Queuine tRNA-ribosyltransferase (372 aa).

Aspartate 89 functions as the Proton acceptor in the catalytic mechanism. Residues 89 to 93, aspartate 161, and glycine 232 contribute to the substrate site; that span reads DSGGF. The tract at residues 262-268 is RNA binding; sequence GIGDLPS. Aspartate 281 (nucleophile) is an active-site residue. The interval 286–290 is RNA binding; important for wobble base 34 recognition; that stretch reads TKAAR. Cysteine 319, cysteine 321, cysteine 324, and histidine 351 together coordinate Zn(2+).

The protein belongs to the queuine tRNA-ribosyltransferase family. In terms of assembly, homodimer. Within each dimer, one monomer is responsible for RNA recognition and catalysis, while the other monomer binds to the replacement base PreQ1. The cofactor is Zn(2+).

It catalyses the reaction 7-aminomethyl-7-carbaguanine + guanosine(34) in tRNA = 7-aminomethyl-7-carbaguanosine(34) in tRNA + guanine. It participates in tRNA modification; tRNA-queuosine biosynthesis. Its function is as follows. Catalyzes the base-exchange of a guanine (G) residue with the queuine precursor 7-aminomethyl-7-deazaguanine (PreQ1) at position 34 (anticodon wobble position) in tRNAs with GU(N) anticodons (tRNA-Asp, -Asn, -His and -Tyr). Catalysis occurs through a double-displacement mechanism. The nucleophile active site attacks the C1' of nucleotide 34 to detach the guanine base from the RNA, forming a covalent enzyme-RNA intermediate. The proton acceptor active site deprotonates the incoming PreQ1, allowing a nucleophilic attack on the C1' of the ribose to form the product. After dissociation, two additional enzymatic reactions on the tRNA convert PreQ1 to queuine (Q), resulting in the hypermodified nucleoside queuosine (7-(((4,5-cis-dihydroxy-2-cyclopenten-1-yl)amino)methyl)-7-deazaguanosine). The polypeptide is Queuine tRNA-ribosyltransferase (Chlamydia abortus (strain DSM 27085 / S26/3) (Chlamydophila abortus)).